A 435-amino-acid polypeptide reads, in one-letter code: Monodehydroascorbate reductase 3, cytosolic (435 aa).

FAD contacts are provided by residues 14–17 (GGVA), glutamate 41, arginine 48, lysine 53, isoleucine 96, and 147–148 (RE). NAD(+) is bound by residues 172-178 (GGYIGLE), glutamate 196, arginine 202, and glycine 261. 174–178 (YIGLE) is a binding site for NADP(+). The NADP(+) site is built by arginine 202 and glycine 261. Aspartate 298 contacts FAD. 314 to 315 (EH) contacts NAD(+). 314–315 (EH) lines the NADP(+) pocket. Valine 316 lines the FAD pocket. An L-ascorbate-binding site is contributed by arginine 320. Residue tyrosine 349 participates in FAD binding. Tyrosine 349 is a binding site for NAD(+). Tyrosine 349 is an NADP(+) binding site. L-ascorbate is bound at residue arginine 351.

It belongs to the FAD-dependent oxidoreductase family. FAD is required as a cofactor.

Its subcellular location is the cytoplasm. It catalyses the reaction 2 monodehydro-L-ascorbate radical + NADH + H(+) = 2 L-ascorbate + NAD(+). Functionally, catalyzes the conversion of monodehydroascorbate to ascorbate, oxidizing NADH in the process. Ascorbate is a major antioxidant against reactive oxygen species (ROS) and nitric oxide (NO). Can use NADPH as electron donor, but possesses lower activity compared to NADH as electron donor. This is Monodehydroascorbate reductase 3, cytosolic from Oryza sativa subsp. japonica (Rice).